A 385-amino-acid polypeptide reads, in one-letter code: Di-N-acetylchitobiase (385 aa).

An N-terminal signal peptide occupies residues 1–38; sequence MSRPQLRRWRLVSSPPSGVPGLALLALLALLALRLAAG. The region spanning 39–385 is the GH18 domain; it reads TDCPCPEPEL…EVLKPKLLQR (347 aa). The active-site Proton donor is Glu143. N-linked (GlcNAc...) asparagine glycans are attached at residues Asn193, Asn228, Asn262, and Asn299.

The protein belongs to the glycosyl hydrolase 18 family.

Its subcellular location is the lysosome. Functionally, involved in the degradation of asparagine-linked glycoproteins. Hydrolyze of N-acetyl-beta-D-glucosamine (1-4)N-acetylglucosamine chitobiose core from the reducing end of the bond, it requires prior cleavage by glycosylasparaginase. The polypeptide is Di-N-acetylchitobiase (CTBS) (Homo sapiens (Human)).